The sequence spans 555 residues: MSKPTVEKAANFLRPIVQADLDSGKHAKIVTRFPPEPNGYLHIGHAKSICLNFGLAEEFGGQCNLRFDDTNPAKEDQEYIDAIKADVEWLGFKWAGEERYASDYFDQLHAWAVELIKAGKAFVCDLNAEEMRTYRGSLTEPGKNSPFRDRSVEENLDLFARMKAGEFPDGARSLRAKIDMASPNINLRDPILYRIRHAHHHQTGDKWCIYPSYDFTHGQSDAIEGITHSICTLEFEDHRPLYEWFLENLPVPAQPRQYEFARLNLNYTITSKRKLKQLVDEGHVQGWDDPRMSTLSGYRRRGYTPASIRAFCDMIGVNRAGGVVDIGMLEFAIREDLDANAARAMCVLKPLKVVITNYPEGKVENLELPRHPKQDMGVRVLPFSREIYIDASDFEETPPDGFKRLIPGGEVRLRGSYVIRADEAIKDAAGNIVELRCSYDENTLGKNPEGRKVKGVIHWVPAAESVECEVRLYDRLFRSANPEKSEEGGSFLDNINPDSLVVLTGCRAEPSLAQAAPEERFQFEREGYFVADLKDSQPGKPVFNRTVTLRDSWGQ.

A 'HIGH' region motif is present at residues 35 to 45 (PEPNGYLHIGH). ATP is bound by residues 36-38 (EPN) and 42-48 (HIGHAKS). The L-glutamine site is built by aspartate 68 and tyrosine 213. ATP contacts are provided by residues threonine 232 and 262–263 (RL). The short motif at 269-273 (ITSKR) is the 'KMSKS' region element.

It belongs to the class-I aminoacyl-tRNA synthetase family. Monomer.

The protein localises to the cytoplasm. The enzyme catalyses tRNA(Gln) + L-glutamine + ATP = L-glutaminyl-tRNA(Gln) + AMP + diphosphate. The protein is Glutamine--tRNA ligase of Ectopseudomonas mendocina (strain ymp) (Pseudomonas mendocina).